The following is a 150-amino-acid chain: Large ribosomal subunit protein bL9 (150 aa).

It belongs to the bacterial ribosomal protein bL9 family.

In terms of biological role, binds to the 23S rRNA. The chain is Large ribosomal subunit protein bL9 from Shewanella piezotolerans (strain WP3 / JCM 13877).